We begin with the raw amino-acid sequence, 369 residues long: Methylthioribose-1-phosphate isomerase (369 aa).

An N-acetylmethionine modification is found at methionine 1. An Omega-N-methylarginine modification is found at arginine 158. Aspartate 248 (proton donor) is an active-site residue. Position 366 is a phosphoserine (serine 366).

The protein belongs to the eIF-2B alpha/beta/delta subunits family. MtnA subfamily.

The protein resides in the cytoplasm. It is found in the nucleus. The catalysed reaction is 5-(methylsulfanyl)-alpha-D-ribose 1-phosphate = 5-(methylsulfanyl)-D-ribulose 1-phosphate. It participates in amino-acid biosynthesis; L-methionine biosynthesis via salvage pathway; L-methionine from S-methyl-5-thio-alpha-D-ribose 1-phosphate: step 1/6. Its function is as follows. Catalyzes the interconversion of methylthioribose-1-phosphate (MTR-1-P) into methylthioribulose-1-phosphate (MTRu-1-P). The chain is Methylthioribose-1-phosphate isomerase (Mri1) from Mus musculus (Mouse).